Consider the following 377-residue polypeptide: Spore coat protein SA (377 aa).

The protein belongs to the glycosyltransferase group 1 family. Glycosyltransferase 4 subfamily.

The protein is Spore coat protein SA (cotSA) of Bacillus subtilis (strain 168).